The chain runs to 139 residues: Small ribosomal subunit protein uS12 (139 aa).

The tract at residues 1–55 (MPTINQLIRKGRKAKVKKSDSPALNKGYNSFKKVQTDLSSPQKRGVCTRVGTMTP) is disordered. Over residues 32-42 (KKVQTDLSSPQ) the composition is skewed to polar residues.

The protein belongs to the universal ribosomal protein uS12 family. As to quaternary structure, part of the 30S ribosomal subunit. Contacts proteins S8 and S17. May interact with IF1 in the 30S initiation complex.

Its function is as follows. With S4 and S5 plays an important role in translational accuracy. Functionally, interacts with and stabilizes bases of the 16S rRNA that are involved in tRNA selection in the A site and with the mRNA backbone. Located at the interface of the 30S and 50S subunits, it traverses the body of the 30S subunit contacting proteins on the other side and probably holding the rRNA structure together. The combined cluster of proteins S8, S12 and S17 appears to hold together the shoulder and platform of the 30S subunit. The chain is Small ribosomal subunit protein uS12 from Halalkalibacterium halodurans (strain ATCC BAA-125 / DSM 18197 / FERM 7344 / JCM 9153 / C-125) (Bacillus halodurans).